We begin with the raw amino-acid sequence, 285 residues long: Transmembrane protein DDB_G0269096 (285 aa).

Disordered regions lie at residues 1–25 (MEDRNLERNIGSDISSSSSIDMSQS) and 59–87 (SFENGENNNNNNNNNNNNNNNNNNNNNKN). Low complexity-rich tracts occupy residues 12-25 (SDISSSSSIDMSQS) and 65-85 (NNNNNNNNNNNNNNNNNNNNN). 5 consecutive transmembrane segments (helical) span residues 124-144 (LEEIGWTWLASFTGILVLALI), 152-172 (AQMQVLIGSFAASAVIIFGVP), 182-202 (LIMGHFLSAVVGSVIRVALVY), 205-225 (ANFEVACALAVSLSIMLMQFT), and 250-270 (FYFIFVPILSGALIMLLTALV).

The protein resides in the membrane. This is Transmembrane protein DDB_G0269096 from Dictyostelium discoideum (Social amoeba).